The sequence spans 398 residues: DNA replication and repair protein RecF (398 aa).

30-37 (GSNGLGKT) provides a ligand contact to ATP.

Belongs to the RecF family.

Its subcellular location is the cytoplasm. Functionally, the RecF protein is involved in DNA metabolism; it is required for DNA replication and normal SOS inducibility. RecF binds preferentially to single-stranded, linear DNA. It also seems to bind ATP. In Renibacterium salmoninarum (strain ATCC 33209 / DSM 20767 / JCM 11484 / NBRC 15589 / NCIMB 2235), this protein is DNA replication and repair protein RecF.